The primary structure comprises 591 residues: V-type ATP synthase alpha chain (591 aa).

242–249 contributes to the ATP binding site; it reads GPFGAGKT.

This sequence belongs to the ATPase alpha/beta chains family.

It catalyses the reaction ATP + H2O + 4 H(+)(in) = ADP + phosphate + 5 H(+)(out). Its function is as follows. Produces ATP from ADP in the presence of a proton gradient across the membrane. The V-type alpha chain is a catalytic subunit. This is V-type ATP synthase alpha chain from Chlamydia caviae (strain ATCC VR-813 / DSM 19441 / 03DC25 / GPIC) (Chlamydophila caviae).